The following is a 390-amino-acid chain: Succinate--CoA ligase [ADP-forming] subunit beta (390 aa).

Positions 9–245 constitute an ATP-grasp domain; it reads KHLLKKYNIP…TTQEDEHETM (237 aa). ATP-binding positions include Lys-46, 53–55, Glu-99, Ser-102, and Glu-107; that span reads GRG. 2 residues coordinate Mg(2+): Asn-200 and Asp-214. Substrate-binding positions include Asn-265 and 322-324; that span reads GIV.

Belongs to the succinate/malate CoA ligase beta subunit family. In terms of assembly, heterotetramer of two alpha and two beta subunits. Mg(2+) is required as a cofactor.

The catalysed reaction is succinate + ATP + CoA = succinyl-CoA + ADP + phosphate. It carries out the reaction GTP + succinate + CoA = succinyl-CoA + GDP + phosphate. The protein operates within carbohydrate metabolism; tricarboxylic acid cycle; succinate from succinyl-CoA (ligase route): step 1/1. Functionally, succinyl-CoA synthetase functions in the citric acid cycle (TCA), coupling the hydrolysis of succinyl-CoA to the synthesis of either ATP or GTP and thus represents the only step of substrate-level phosphorylation in the TCA. The beta subunit provides nucleotide specificity of the enzyme and binds the substrate succinate, while the binding sites for coenzyme A and phosphate are found in the alpha subunit. The sequence is that of Succinate--CoA ligase [ADP-forming] subunit beta from Coxiella burnetii (strain RSA 493 / Nine Mile phase I).